Reading from the N-terminus, the 338-residue chain is Solute carrier family 35 member G3 (338 aa).

Residues 1-24 (MAGSHPYFNQPDSTHPSPPSAPPS) are disordered. Helical transmembrane passes span 37-57 (TSGLLVALLGGGLPAGFVGPL), 67-87 (LPSLELLIWRCLFHLPIALLL), 105-125 (FFCALLNILSIGCAYSAVQVV), 160-180 (CGLLGCILGLIIIVGPGLWTL), 185-205 (TGVYTALGYVEAFLGGLALSL), 221-241 (TVAFLSGLVGLLGSVPGLFVL), 250-270 (LLSWSCVGAVGILALVSFTCV), 281-301 (LVCAVLHSEVVVALILQYYML), and 305-325 (VAPSDIVAAGVVLGSIAIITA). Positions 49 to 174 (LPAGFVGPLS…CILGLIIIVG (126 aa)) constitute an EamA 1 domain. Positions 272–325 (YAVTKAHPALVCAVLHSEVVVALILQYYMLHETVAPSDIVAAGVVLGSIAIITA) constitute an EamA 2 domain.

This sequence belongs to the SLC35G solute transporter family. In terms of tissue distribution, expressed in testis.

Its subcellular location is the membrane. The polypeptide is Solute carrier family 35 member G3 (SLC35G3) (Homo sapiens (Human)).